The chain runs to 75 residues: Large ribosomal subunit protein bL28 (75 aa).

It belongs to the bacterial ribosomal protein bL28 family.

In Baumannia cicadellinicola subsp. Homalodisca coagulata, this protein is Large ribosomal subunit protein bL28.